Here is a 50-residue protein sequence, read N- to C-terminus: uncharacterized protein (50 aa).

Residues 1–22 (MSKVAALGWGTLVYLGVGLLLA) form the signal peptide.

This is an uncharacterized protein from Dictyostelium discoideum (Social amoeba).